The following is a 230-amino-acid chain: MSEAVFFVENAEELAKQKMDNINPELSEKFQLLIKFLSRFPESCSNPRSKQVRKNFGKAEHIEYLAQNFNESRLPKKPTPPTTIPDEVVSLVLNVSFDIPQENLNRIKEEHRLSMASENIVGDLLERYLAEKLEPCGWIWCSGTSVKAVDFIHYDNEKDEWGLLQVKNRDNTENSSSSKIRDNTPIKKWFRTFSQRDATNWENFPDEVSSKDLNEDDFRAFVESYLRKIK.

It catalyses the reaction Endonucleolytic cleavage of DNA to give specific double-stranded fragments with terminal 5'-phosphates.. Functionally, a P subtype restriction enzyme that recognizes the double-stranded sequence 5'-GGWCC-3' and cleaves after G-1. This is Type II restriction enzyme SinI (sinIR) from Salmonella infantis.